The sequence spans 260 residues: Imidazole glycerol phosphate synthase subunit HisF (260 aa).

Residues D12 and D131 contribute to the active site.

The protein belongs to the HisA/HisF family. As to quaternary structure, heterodimer of HisH and HisF.

It is found in the cytoplasm. The catalysed reaction is 5-[(5-phospho-1-deoxy-D-ribulos-1-ylimino)methylamino]-1-(5-phospho-beta-D-ribosyl)imidazole-4-carboxamide + L-glutamine = D-erythro-1-(imidazol-4-yl)glycerol 3-phosphate + 5-amino-1-(5-phospho-beta-D-ribosyl)imidazole-4-carboxamide + L-glutamate + H(+). It participates in amino-acid biosynthesis; L-histidine biosynthesis; L-histidine from 5-phospho-alpha-D-ribose 1-diphosphate: step 5/9. IGPS catalyzes the conversion of PRFAR and glutamine to IGP, AICAR and glutamate. The HisF subunit catalyzes the cyclization activity that produces IGP and AICAR from PRFAR using the ammonia provided by the HisH subunit. This chain is Imidazole glycerol phosphate synthase subunit HisF, found in Corynebacterium jeikeium (strain K411).